Consider the following 688-residue polypeptide: DNA-directed RNA polymerase subunit beta' (688 aa).

Zn(2+)-binding residues include C69, C71, C87, and C90. 3 residues coordinate Mg(2+): D497, D499, and D501.

The protein belongs to the RNA polymerase beta' chain family. RpoC1 subfamily. As to quaternary structure, in plastids the minimal PEP RNA polymerase catalytic core is composed of four subunits: alpha, beta, beta', and beta''. When a (nuclear-encoded) sigma factor is associated with the core the holoenzyme is formed, which can initiate transcription. Mg(2+) serves as cofactor. Requires Zn(2+) as cofactor.

The protein localises to the plastid. The protein resides in the chloroplast. The enzyme catalyses RNA(n) + a ribonucleoside 5'-triphosphate = RNA(n+1) + diphosphate. Its function is as follows. DNA-dependent RNA polymerase catalyzes the transcription of DNA into RNA using the four ribonucleoside triphosphates as substrates. The sequence is that of DNA-directed RNA polymerase subunit beta' from Sinapis alba (White mustard).